A 316-amino-acid chain; its full sequence is Probable cell division protein WhiA (316 aa).

A DNA-binding region (H-T-H motif) is located at residues 277–310 (SLEQLGRLADPPITKDAIAGRIRRLLQLAEKTEK).

This sequence belongs to the WhiA family.

In terms of biological role, involved in cell division and chromosome segregation. The sequence is that of Probable cell division protein WhiA from Bifidobacterium adolescentis (strain ATCC 15703 / DSM 20083 / NCTC 11814 / E194a).